The primary structure comprises 720 residues: Pro-neuregulin-3, membrane-bound isoform (720 aa).

Topologically, residues 1–360 (MSEGAAAASP…MESEEVYQRQ (360 aa)) are extracellular. Disordered regions lie at residues 28-48 (AAAA…AAEP), 119-223 (SSFP…AMPS), and 246-280 (PFQD…TTYS). Positions 34–44 (AGGGPDGGGEG) are enriched in gly residues. Low complexity predominate over residues 127–148 (TTTTTTSTTSPATPSAGGAASS). The span at 149 to 163 (RTPNRISTRLTTITR) shows a compositional bias: polar residues. Low complexity-rich tracts occupy residues 187–205 (TAAP…SSST) and 250–271 (AASS…TSTS). The EGF-like domain maps to 286–329 (HFKPCRDKDLAYCLNDGECFVIETLTGSHKHCRCKEGYQGVRCD). 3 disulfides stabilise this stretch: Cys290-Cys304, Cys298-Cys317, and Cys319-Cys328. A helical transmembrane segment spans residues 361–381 (VLSISCIIFGIVIVGMFCAAF). The Cytoplasmic portion of the chain corresponds to 382 to 720 (YFKSKKQAKQ…EIQRDSALTK (339 aa)). The interval 451–481 (PQSFPEVPSPDRGSQSVKHHRSLSSCCSPGQ) is disordered.

It belongs to the neuregulin family. In terms of assembly, interacts with ERBB4. In terms of processing, proteolytic cleavage close to the plasma membrane on the external face leads to the release of the soluble growth factor form. Post-translationally, extensive glycosylation precedes the proteolytic cleavage. Isoform 3 is glycosylated. Highly expressed in most regions of the brain with the exception of corpus callosum. Expressed at lower level in testis. Not detected in heart, placenta, lung, liver, skeletal muscle, kidney, pancreas, spleen, thymus, prostate, ovary, small intestine, colon and peripheral blood leukocytes.

It localises to the cell membrane. The protein resides in the secreted. Direct ligand for the ERBB4 tyrosine kinase receptor. Binding results in ligand-stimulated tyrosine phosphorylation and activation of the receptor. Does not bind to the EGF receptor, ERBB2 or ERBB3 receptors. May be a survival factor for oligodendrocytes. The polypeptide is Pro-neuregulin-3, membrane-bound isoform (NRG3) (Homo sapiens (Human)).